The sequence spans 145 residues: Secreted RxLR effector protein 43 (145 aa).

The signal sequence occupies residues 1–20 (MKVTMALAALCVALQAPCIG). A RxLR motif is present at residues 31–34 (RHLR).

It belongs to the RxLR effector family.

Its subcellular location is the secreted. The protein localises to the host nucleus. It is found in the host cytoplasm. Functionally, secreted effector that completely suppresses the host cell death induced by cell death-inducing proteins. The polypeptide is Secreted RxLR effector protein 43 (Plasmopara viticola (Downy mildew of grapevine)).